Here is a 485-residue protein sequence, read N- to C-terminus: Probable L-xylulose kinase (485 aa).

This sequence belongs to the FGGY kinase family. In terms of assembly, homodimer.

The catalysed reaction is L-xylulose + ATP = L-xylulose 5-phosphate + ADP + H(+). The chain is Probable L-xylulose kinase (lyx) from Haemophilus influenzae (strain ATCC 51907 / DSM 11121 / KW20 / Rd).